The chain runs to 146 residues: Ribosomal RNA large subunit methyltransferase H (146 aa).

S-adenosyl-L-methionine-binding positions include L68, G95, and 114–119 (LSSLTF).

The protein belongs to the RNA methyltransferase RlmH family. Homodimer.

It is found in the cytoplasm. The catalysed reaction is pseudouridine(1915) in 23S rRNA + S-adenosyl-L-methionine = N(3)-methylpseudouridine(1915) in 23S rRNA + S-adenosyl-L-homocysteine + H(+). In terms of biological role, specifically methylates the pseudouridine at position 1915 (m3Psi1915) in 23S rRNA. The polypeptide is Ribosomal RNA large subunit methyltransferase H (Thermodesulfovibrio yellowstonii (strain ATCC 51303 / DSM 11347 / YP87)).